A 1213-amino-acid polypeptide reads, in one-letter code: Hybrid signal transduction histidine kinase K (1213 aa).

Disordered regions lie at residues 1-37 (MIEL…NKTN), 98-189 (NNNY…SSSS), 279-392 (NKNV…IPFR), and 495-565 (TTEQ…NYNN). Composition is skewed to low complexity over residues 98 to 162 (NNNY…QKDQ), 171 to 189 (SLSS…SSSS), 279 to 331 (NKNV…NSGA), 339 to 371 (NNNN…SNNN), 498 to 511 (QQQQ…QQQQ), and 522 to 565 (QRQQ…NYNN). Transmembrane regions (helical) follow at residues 600 to 618 (IIFN…GSNI), 628 to 648 (LIIG…IFFW), 652 to 672 (INKP…SLVI), 676 to 696 (TGSI…ALTI), 729 to 749 (IQWS…NLYG), and 768 to 788 (IIDV…QYFI). The 231-residue stretch at 822 to 1052 (TMSHEIRTPL…TFWFILPLEE (231 aa)) folds into the Histidine kinase domain. The residue at position 825 (His-825) is a Phosphohistidine; by autocatalysis. Positions 1076–1199 (KVLIAEDNII…QLRSAIEMAI (124 aa)) constitute a Response regulatory domain. 4-aspartylphosphate is present on Asp-1125.

In terms of processing, activation probably requires transfer of a phosphate group between a histidine in the kinase core (transmitter) domain and an aspartate of the receiver domain.

The protein resides in the nucleus membrane. The enzyme catalyses ATP + protein L-histidine = ADP + protein N-phospho-L-histidine.. Involved in a signal transduction pathway that regulates morphogenesis and controls entry into the culmination stage. May act via the regA pathway, being activated by a morphogenesis-stimulated ligand, reducing phosphodiesterase regA levels and allowing cAMP level to rise to promote the culmination stage. This protein probably undergoes an ATP-dependent autophosphorylation at a conserved histidine residue in the kinase core, and a phosphoryl group is then transferred to a conserved aspartate residue in the receiver domain. This chain is Hybrid signal transduction histidine kinase K (dhkK), found in Dictyostelium discoideum (Social amoeba).